Consider the following 268-residue polypeptide: MFLRRVHPVRLGHASQRSLTTTKSRNESTTTTVEAPQAAPSPPPDAFTEEFLRNQIKVTELQRVILGVGSSLAALVNPRRHDMIACLGETTGVPALDAIRRQMLASDEGRQILADRPRINTRTVDMAALKALPETSFGHQYVHFLEKHDITPDSRAEVRFMDDPELAYVMTRYREVHDLVHTVLGMPTNMLGEVAVKWVEALNTGLPMCYGGAVFGAQRQNYLRHYLPWALRMGRQVRPLMNVYWEKRWEQDMAELRQELNIEELVIN.

Positions 1-10 (MFLRRVHPVR) are enriched in basic residues. Residues 1–18 (MFLRRVHPVRLGHASQRS) constitute a mitochondrion transit peptide. Residues 1-44 (MFLRRVHPVRLGHASQRSLTTTKSRNESTTTTVEAPQAAPSPPP) form a disordered region. Residues 20 to 38 (TTTKSRNESTTTTVEAPQA) are compositionally biased toward low complexity. Zn(2+) contacts are provided by histidine 177, aspartate 178, histidine 181, and glutamate 193.

This sequence belongs to the COQ4 family. In terms of assembly, component of a multi-subunit COQ enzyme complex. Zn(2+) is required as a cofactor.

The protein localises to the mitochondrion inner membrane. The enzyme catalyses a 4-hydroxy-3-methoxy-5-(all-trans-polyprenyl)benzoate + H(+) = a 2-methoxy-6-(all-trans-polyprenyl)phenol + CO2. Its pathway is cofactor biosynthesis; ubiquinone biosynthesis. In terms of biological role, lyase that catalyzes the C1-decarboxylation of 4-hydroxy-3-methoxy-5-(all-trans-polyprenyl)benzoic acid into 2-methoxy-6-(all-trans-polyprenyl)phenol during ubiquinone biosynthesis. The sequence is that of Ubiquinone biosynthesis protein COQ4 homolog 1, mitochondrial from Culex quinquefasciatus (Southern house mosquito).